The primary structure comprises 104 residues: uncharacterized protein (104 aa).

The protein to A.aeolicus AQ_377.

This is an uncharacterized protein from Archaeoglobus fulgidus (strain ATCC 49558 / DSM 4304 / JCM 9628 / NBRC 100126 / VC-16).